The chain runs to 508 residues: Photosystem II CP47 reaction center protein (508 aa).

The next 6 helical transmembrane spans lie at 21 to 36 (SVHI…WAGS), 101 to 115 (IVFS…IWHW), 140 to 156 (GIHL…FGAF), 203 to 218 (IAAG…FHLS), 237 to 252 (VLSS…AFVV), and 457 to 472 (TFAL…HGAR).

It belongs to the PsbB/PsbC family. PsbB subfamily. PSII is composed of 1 copy each of membrane proteins PsbA, PsbB, PsbC, PsbD, PsbE, PsbF, PsbH, PsbI, PsbJ, PsbK, PsbL, PsbM, PsbT, PsbX, PsbY, PsbZ, Psb30/Ycf12, at least 3 peripheral proteins of the oxygen-evolving complex and a large number of cofactors. It forms dimeric complexes. Binds multiple chlorophylls. PSII binds additional chlorophylls, carotenoids and specific lipids. is required as a cofactor.

The protein resides in the plastid. Its subcellular location is the chloroplast thylakoid membrane. One of the components of the core complex of photosystem II (PSII). It binds chlorophyll and helps catalyze the primary light-induced photochemical processes of PSII. PSII is a light-driven water:plastoquinone oxidoreductase, using light energy to abstract electrons from H(2)O, generating O(2) and a proton gradient subsequently used for ATP formation. The chain is Photosystem II CP47 reaction center protein from Zea mays (Maize).